The chain runs to 420 residues: UDP-N-acetylglucosamine 1-carboxyvinyltransferase (420 aa).

22 to 23 (KN) contributes to the phosphoenolpyruvate binding site. Arginine 93 contacts UDP-N-acetyl-alpha-D-glucosamine. Catalysis depends on cysteine 117, which acts as the Proton donor. The residue at position 117 (cysteine 117) is a 2-(S-cysteinyl)pyruvic acid O-phosphothioketal. Residues 162–165 (KVSV), aspartate 307, and isoleucine 329 contribute to the UDP-N-acetyl-alpha-D-glucosamine site.

The protein belongs to the EPSP synthase family. MurA subfamily.

The protein resides in the cytoplasm. It carries out the reaction phosphoenolpyruvate + UDP-N-acetyl-alpha-D-glucosamine = UDP-N-acetyl-3-O-(1-carboxyvinyl)-alpha-D-glucosamine + phosphate. It participates in cell wall biogenesis; peptidoglycan biosynthesis. Cell wall formation. Adds enolpyruvyl to UDP-N-acetylglucosamine. The chain is UDP-N-acetylglucosamine 1-carboxyvinyltransferase from Actinobacillus succinogenes (strain ATCC 55618 / DSM 22257 / CCUG 43843 / 130Z).